Reading from the N-terminus, the 598-residue chain is uncharacterized protein (598 aa).

4 residues coordinate Mn(2+): Asp397, Asp408, Glu506, and Glu520.

The protein belongs to the peptidase M24B family. Mn(2+) is required as a cofactor.

This is an uncharacterized protein from Schizosaccharomyces pombe (strain 972 / ATCC 24843) (Fission yeast).